The chain runs to 190 residues: dCTP deaminase, dUMP-forming (190 aa).

DCTP-binding positions include 101–106 (KSSLGR), Asp119, 127–129 (TLE), Gln148, Tyr162, and Gln174. The Proton donor/acceptor role is filled by Glu129. Residues 163–190 (GSTRVGSKYQGQRGPTPSRSYQNFITST) form a disordered region. The span at 171-190 (YQGQRGPTPSRSYQNFITST) shows a compositional bias: polar residues.

This sequence belongs to the dCTP deaminase family. In terms of assembly, homotrimer.

It catalyses the reaction dCTP + 2 H2O = dUMP + NH4(+) + diphosphate. It participates in pyrimidine metabolism; dUMP biosynthesis; dUMP from dCTP: step 1/1. Its function is as follows. Bifunctional enzyme that catalyzes both the deamination of dCTP to dUTP and the hydrolysis of dUTP to dUMP without releasing the toxic dUTP intermediate. This Mycobacterium avium (strain 104) protein is dCTP deaminase, dUMP-forming.